A 292-amino-acid chain; its full sequence is uncharacterized protein (292 aa).

The disordered stretch occupies residues 62-81 (ESSSDSDMGFHESQQNQKSN).

This is an uncharacterized protein from Homo sapiens (Human).